The following is a 305-amino-acid chain: Tyrosine recombinase XerC (305 aa).

A Core-binding (CB) domain is found at 4–95 (TSIQALINKW…AVKNFYRFLE (92 aa)). Residues 116–298 (LLPKALSEDD…SIKHLEAVYT (183 aa)) enclose the Tyr recombinase domain. Residues arginine 159, lysine 182, histidine 250, arginine 253, and histidine 276 contribute to the active site. Residue tyrosine 285 is the O-(3'-phospho-DNA)-tyrosine intermediate of the active site.

Belongs to the 'phage' integrase family. XerC subfamily. Forms a cyclic heterotetrameric complex composed of two molecules of XerC and two molecules of XerD.

Its subcellular location is the cytoplasm. Its function is as follows. Site-specific tyrosine recombinase, which acts by catalyzing the cutting and rejoining of the recombining DNA molecules. The XerC-XerD complex is essential to convert dimers of the bacterial chromosome into monomers to permit their segregation at cell division. It also contributes to the segregational stability of plasmids. This chain is Tyrosine recombinase XerC, found in Rickettsia massiliae (strain Mtu5).